Here is a 238-residue protein sequence, read N- to C-terminus: Protein MIS12 homolog (238 aa).

Residues 117–149 adopt a coiled-coil conformation; that stretch reads ELDAELDSLRDKLNVVGKRSVELDSELQALERS.

Belongs to the mis12 family.

It localises to the chromosome. Its subcellular location is the centromere. It is found in the kinetochore. Its function is as follows. Constitutive component of kinetochores that is essential for proper cell division during mitotic cell cycle. May play a role in the modulation of centromere during meiosis. This is Protein MIS12 homolog from Arabidopsis thaliana (Mouse-ear cress).